The chain runs to 547 residues: Elongator complex protein 3 (547 aa).

The region spanning 82–372 (RTASGIAVVA…YRVQRDIPMP (291 aa)) is the Radical SAM core domain. [4Fe-4S] cluster contacts are provided by Cys99, Cys109, and Cys112. A Phosphoserine modification is found at Ser161. Residue Lys164 participates in acetyl-CoA binding. Lys229 is subject to N6-methyllysine. Tyr251 carries the post-translational modification Phosphotyrosine. The N-acetyltransferase domain maps to 396-547 (IQCRDVRTRE…QGPYMVKMLK (152 aa)). Acetyl-CoA contacts are provided by residues 474 to 477 (ELHV), 497 to 499 (FGM), and Tyr530.

It belongs to the ELP3 family. In terms of assembly, component of the elongator complex which consists of ELP1, ELP2, ELP3, ELP4, ELP5 and ELP6. ELP1, ELP2 and ELP3 form the elongator core complex. Interacts with alpha-tubulin. Requires [4Fe-4S] cluster as cofactor. Post-translationally, tyrosine-phosphorylated. Also serine/threonine-phosphorylated.

The protein resides in the cytoplasm. It is found in the nucleus. It catalyses the reaction uridine(34) in tRNA + acetyl-CoA + S-adenosyl-L-methionine + H2O = 5-(carboxymethyl)uridine(34) in tRNA + 5'-deoxyadenosine + L-methionine + CoA + 2 H(+). The protein operates within tRNA modification; 5-methoxycarbonylmethyl-2-thiouridine-tRNA biosynthesis. Functionally, catalytic tRNA acetyltransferase subunit of the elongator complex which is required for multiple tRNA modifications, including mcm5U (5-methoxycarbonylmethyl uridine), mcm5s2U (5-methoxycarbonylmethyl-2-thiouridine), and ncm5U (5-carbamoylmethyl uridine). In the elongator complex, acts as a tRNA uridine(34) acetyltransferase by mediating formation of carboxymethyluridine in the wobble base at position 34 in tRNAs. May also act as a protein lysine acetyltransferase by mediating acetylation of target proteins; such activity is however unclear in vivo and recent evidences suggest that ELP3 primarily acts as a tRNA acetyltransferase. Involved in neurogenesis: regulates the migration and branching of projection neurons in the developing cerebral cortex, through a process depending on alpha-tubulin acetylation. Required for acetylation of GJA1 in the developing cerebral cortex. This Mus musculus (Mouse) protein is Elongator complex protein 3.